Here is a 76-residue protein sequence, read N- to C-terminus: UPF0291 protein GWCH70_1239 (76 aa).

Positions 54-76 (VIDPNGNDVTPKKLKESQKSRLH) are disordered. Positions 63 to 76 (TPKKLKESQKSRLH) are enriched in basic and acidic residues.

This sequence belongs to the UPF0291 family.

It localises to the cytoplasm. The sequence is that of UPF0291 protein GWCH70_1239 from Geobacillus sp. (strain WCH70).